We begin with the raw amino-acid sequence, 603 residues long: Probable methyltransferase PMT4 (603 aa).

At 1–12 (MKVASVIGLRPR) the chain is on the cytoplasmic side. The helical; Signal-anchor for type II membrane protein transmembrane segment at 13-33 (ISGLLFLTLGVIALITILVPN) threads the bilayer. Residues 34-603 (SDSSSTTSTT…LVCQKPLLKK (570 aa)) are Lumenal-facing. N-linked (GlcNAc...) asparagine glycosylation is found at N96 and N393.

It belongs to the methyltransferase superfamily.

The protein localises to the endoplasmic reticulum membrane. The polypeptide is Probable methyltransferase PMT4 (Arabidopsis thaliana (Mouse-ear cress)).